The sequence spans 276 residues: Undecaprenyl-diphosphatase (276 aa).

7 helical membrane-spanning segments follow: residues 46–66 (AGAS…LIYF), 94–114 (LMGI…VKAI), 122–142 (LWVV…AERV), 152–172 (LGIG…IPGV), 196–216 (SFLL…IAEF), 226–246 (LGTL…IRFL), and 253–273 (VFIV…ALGF).

The protein belongs to the UppP family.

The protein resides in the cell inner membrane. It catalyses the reaction di-trans,octa-cis-undecaprenyl diphosphate + H2O = di-trans,octa-cis-undecaprenyl phosphate + phosphate + H(+). Catalyzes the dephosphorylation of undecaprenyl diphosphate (UPP). Confers resistance to bacitracin. The chain is Undecaprenyl-diphosphatase from Synechococcus sp. (strain JA-3-3Ab) (Cyanobacteria bacterium Yellowstone A-Prime).